A 300-amino-acid polypeptide reads, in one-letter code: 4-diphosphocytidyl-2-C-methyl-D-erythritol kinase (300 aa).

Lys-22 is an active-site residue. 105-115 (PMGGGLGGGSS) contributes to the ATP binding site. The active site involves Asp-147.

Belongs to the GHMP kinase family. IspE subfamily.

The enzyme catalyses 4-CDP-2-C-methyl-D-erythritol + ATP = 4-CDP-2-C-methyl-D-erythritol 2-phosphate + ADP + H(+). The protein operates within isoprenoid biosynthesis; isopentenyl diphosphate biosynthesis via DXP pathway; isopentenyl diphosphate from 1-deoxy-D-xylulose 5-phosphate: step 3/6. Catalyzes the phosphorylation of the position 2 hydroxy group of 4-diphosphocytidyl-2C-methyl-D-erythritol. The chain is 4-diphosphocytidyl-2-C-methyl-D-erythritol kinase from Colwellia psychrerythraea (strain 34H / ATCC BAA-681) (Vibrio psychroerythus).